Consider the following 429-residue polypeptide: Tyrosine-protein kinase STYK1 (429 aa).

Residues 30–50 traverse the membrane as a helical segment; it reads VIIVPALLVGGFLILLAIILW. The interval 58 to 83 is disordered; sequence SQRQSPGPRGTASVPASRGRSQEAAG. Residues 119-390 enclose the Protein kinase domain; sequence LEVLEQIHSG…GQLLQRLEAA (272 aa). Residues 125–133 and Lys-152 each bind ATP; that span reads IHSGSCGTL. Asp-256 serves as the catalytic Proton acceptor.

Belongs to the protein kinase superfamily. Tyr protein kinase family. Highly expressed in colon and small intestine. Weakly or not expressed in spleen, skeletal muscle, liver, kidney, heart and brain. Expressed in transformed kidney cell lines (COS-1 and HEK293T).

The protein resides in the membrane. It catalyses the reaction L-tyrosyl-[protein] + ATP = O-phospho-L-tyrosyl-[protein] + ADP + H(+). Functionally, probable tyrosine protein-kinase, which has strong transforming capabilities on a variety of cell lines including NIH 3T3 fibroblasts and on athymic nude mice. When overexpressed, it can also induce tumor cell invasion as well as metastasis in distant organs. May act by activating both MAP kinase and phosphatidylinositol 3'-kinases (PI3K) pathways. The sequence is that of Tyrosine-protein kinase STYK1 (Styk1) from Mus musculus (Mouse).